A 93-amino-acid polypeptide reads, in one-letter code: Cobalt transport protein CbiN (93 aa).

Helical transmembrane passes span 5-25 and 63-83; these read LMLL…NHGG and LLFT…LGYC.

Belongs to the CbiN family. In terms of assembly, forms an energy-coupling factor (ECF) transporter complex composed of an ATP-binding protein (A component, CbiO), a transmembrane protein (T component, CbiQ) and 2 possible substrate-capture proteins (S components, CbiM and CbiN) of unknown stoichimetry.

The protein resides in the cell inner membrane. Its pathway is cofactor biosynthesis; adenosylcobalamin biosynthesis. Its function is as follows. Part of the energy-coupling factor (ECF) transporter complex CbiMNOQ involved in cobalt import. This is Cobalt transport protein CbiN from Salmonella paratyphi B (strain ATCC BAA-1250 / SPB7).